A 685-amino-acid polypeptide reads, in one-letter code: Serotransferrin (685 aa).

The signal sequence occupies residues 1–16 (MKPLLLLPLLGCLATI). 2 consecutive Transferrin-like domains span residues 23–329 (VKWC…ALKI) and 340–666 (MKWC…SLRT). An intrachain disulfide couples Cys-26 to Cys-48. Fe(3+) contacts are provided by Asp-72 and Tyr-102. Cystine bridges form between Cys-125/Cys-206, Cys-170/Cys-184, and Cys-234/Cys-248. Residues Thr-127, Lys-131, Ala-133, and Gly-134 each coordinate hydrogencarbonate. Tyr-200 provides a ligand contact to Fe(3+). His-256 lines the Fe(3+) pocket. 2 disulfides stabilise this stretch: Cys-343-Cys-379 and Cys-353-Cys-370. Fe(3+) is bound by residues Asp-394 and Tyr-428. 7 disulfide bridges follow: Cys-404-Cys-678, Cys-419-Cys-639, Cys-451-Cys-526, Cys-475-Cys-667, Cys-485-Cys-499, Cys-496-Cys-509, and Cys-566-Cys-580. Hydrogencarbonate contacts are provided by Thr-453, Arg-457, Ala-459, and Gly-460. Asn-476 carries N-linked (GlcNAc...) asparagine glycosylation. Tyr-520 is a Fe(3+) binding site. His-588 contributes to the Fe(3+) binding site.

Belongs to the transferrin family. In terms of assembly, monomer.

Its subcellular location is the secreted. In terms of biological role, transferrins are iron binding transport proteins which can bind two Fe(3+) ions in association with the binding of an anion, usually bicarbonate. This Paralichthys olivaceus (Bastard halibut) protein is Serotransferrin (tf).